The chain runs to 492 residues: Aspartyl/glutamyl-tRNA(Asn/Gln) amidotransferase subunit B (492 aa).

This sequence belongs to the GatB/GatE family. GatB subfamily. In terms of assembly, heterotrimer of A, B and C subunits.

It carries out the reaction L-glutamyl-tRNA(Gln) + L-glutamine + ATP + H2O = L-glutaminyl-tRNA(Gln) + L-glutamate + ADP + phosphate + H(+). The catalysed reaction is L-aspartyl-tRNA(Asn) + L-glutamine + ATP + H2O = L-asparaginyl-tRNA(Asn) + L-glutamate + ADP + phosphate + 2 H(+). In terms of biological role, allows the formation of correctly charged Asn-tRNA(Asn) or Gln-tRNA(Gln) through the transamidation of misacylated Asp-tRNA(Asn) or Glu-tRNA(Gln) in organisms which lack either or both of asparaginyl-tRNA or glutaminyl-tRNA synthetases. The reaction takes place in the presence of glutamine and ATP through an activated phospho-Asp-tRNA(Asn) or phospho-Glu-tRNA(Gln). This Dehalococcoides mccartyi (strain CBDB1) protein is Aspartyl/glutamyl-tRNA(Asn/Gln) amidotransferase subunit B.